The chain runs to 25 residues: Kappa-conotoxin RIIIJ (25 aa).

A 4-hydroxyproline mark is found at proline 2, proline 3, proline 7, proline 8, proline 13, proline 15, and proline 21. 3 cysteine pairs are disulfide-bonded: cysteine 4-cysteine 17, cysteine 5-cysteine 22, and cysteine 12-cysteine 23.

Belongs to the conotoxin M superfamily. In terms of tissue distribution, expressed by the venom duct.

Its subcellular location is the secreted. Its function is as follows. Kappa-conotoxins inhibits voltage-gated potassium channels. This toxin dose-dependently and reversibly inhibits the Kv1.2/KCNA2 channel in mammalia. Does not exert protective effect on cardiac tissue when administered after an ischemic event. The sequence is that of Kappa-conotoxin RIIIJ from Conus radiatus (Rayed cone).